A 660-amino-acid chain; its full sequence is tRNA 5-methylaminomethyl-2-thiouridine biosynthesis bifunctional protein MnmC (660 aa).

Residues 1-242 (MTDRIVPATL…KRAMLVGEFA (242 aa)) form a tRNA (mnm(5)s(2)U34)-methyltransferase region. The FAD-dependent cmnm(5)s(2)U34 oxidoreductase stretch occupies residues 266-660 (IGAGLAGCAV…VRALRHGRVA (395 aa)).

The protein in the N-terminal section; belongs to the methyltransferase superfamily. tRNA (mnm(5)s(2)U34)-methyltransferase family. It in the C-terminal section; belongs to the DAO family. The cofactor is FAD.

The protein resides in the cytoplasm. It catalyses the reaction 5-aminomethyl-2-thiouridine(34) in tRNA + S-adenosyl-L-methionine = 5-methylaminomethyl-2-thiouridine(34) in tRNA + S-adenosyl-L-homocysteine + H(+). Catalyzes the last two steps in the biosynthesis of 5-methylaminomethyl-2-thiouridine (mnm(5)s(2)U) at the wobble position (U34) in tRNA. Catalyzes the FAD-dependent demodification of cmnm(5)s(2)U34 to nm(5)s(2)U34, followed by the transfer of a methyl group from S-adenosyl-L-methionine to nm(5)s(2)U34, to form mnm(5)s(2)U34. In Burkholderia pseudomallei (strain K96243), this protein is tRNA 5-methylaminomethyl-2-thiouridine biosynthesis bifunctional protein MnmC.